Reading from the N-terminus, the 153-residue chain is Glutamyl-tRNA(Gln) amidotransferase subunit C, mitochondrial (153 aa).

The interval 31–55 (HPTKVPQQPEPNAFPDLDNNTDDDP) is disordered.

The protein belongs to the GatC family. Subunit of the heterotrimeric GatCAB amidotransferase (AdT) complex, composed of A, B and C subunits.

The protein localises to the mitochondrion. The enzyme catalyses L-glutamyl-tRNA(Gln) + L-glutamine + ATP + H2O = L-glutaminyl-tRNA(Gln) + L-glutamate + ADP + phosphate + H(+). In terms of biological role, allows the formation of correctly charged Gln-tRNA(Gln) through the transamidation of misacylated Glu-tRNA(Gln) in the mitochondria. The reaction takes place in the presence of glutamine and ATP through an activated gamma-phospho-Glu-tRNA(Gln). The chain is Glutamyl-tRNA(Gln) amidotransferase subunit C, mitochondrial from Drosophila willistoni (Fruit fly).